Reading from the N-terminus, the 83-residue chain is Large ribosomal subunit protein bL27 (83 aa).

Belongs to the bacterial ribosomal protein bL27 family.

In Bifidobacterium adolescentis (strain ATCC 15703 / DSM 20083 / NCTC 11814 / E194a), this protein is Large ribosomal subunit protein bL27.